A 272-amino-acid chain; its full sequence is Shikimate dehydrogenase (NADP(+)) (272 aa).

Shikimate contacts are provided by residues 14 to 16 (SKS) and T61. K65 functions as the Proton acceptor in the catalytic mechanism. NADP(+) is bound at residue E77. Shikimate is bound by residues N86 and D102. Residues 126-130 (GAGGA), 149-154 (NRTVSR), and M213 each bind NADP(+). Residue Y215 coordinates shikimate. Residue G237 coordinates NADP(+).

It belongs to the shikimate dehydrogenase family. As to quaternary structure, homodimer.

It catalyses the reaction shikimate + NADP(+) = 3-dehydroshikimate + NADPH + H(+). It functions in the pathway metabolic intermediate biosynthesis; chorismate biosynthesis; chorismate from D-erythrose 4-phosphate and phosphoenolpyruvate: step 4/7. Functionally, involved in the biosynthesis of the chorismate, which leads to the biosynthesis of aromatic amino acids. Catalyzes the reversible NADPH linked reduction of 3-dehydroshikimate (DHSA) to yield shikimate (SA). This is Shikimate dehydrogenase (NADP(+)) from Escherichia coli O139:H28 (strain E24377A / ETEC).